We begin with the raw amino-acid sequence, 490 residues long: UDP-glycosyltransferase 73C7 (490 aa).

UDP-alpha-D-glucose contacts are provided by residues Ser291, 351-353 (APQ), 368-376 (HCGWNSTLE), and 390-393 (FAEQ).

This sequence belongs to the UDP-glycosyltransferase family.

The chain is UDP-glycosyltransferase 73C7 (UGT73C7) from Arabidopsis thaliana (Mouse-ear cress).